The following is an 819-amino-acid chain: Ribosome-releasing factor 2, mitochondrial (819 aa).

Residues 1-30 constitute a mitochondrion transit peptide; sequence MWKWNVRRWAGARVNISKNRLSVINVGSRY. Positions 39-327 constitute a tr-type G domain; that stretch reads SKVRNIGIIA…AIVNYLPSPI (289 aa). Residues 48–55, 113–117, and 165–168 contribute to the GTP site; these read AHIDAGKT, DTPGH, and NKMD.

It belongs to the TRAFAC class translation factor GTPase superfamily. Classic translation factor GTPase family. EF-G/EF-2 subfamily.

It localises to the mitochondrion. Mitochondrial GTPase that mediates the disassembly of ribosomes from messenger RNA at the termination of mitochondrial protein biosynthesis. Not involved in the GTP-dependent ribosomal translocation step during translation elongation. In Saccharomyces cerevisiae (strain RM11-1a) (Baker's yeast), this protein is Ribosome-releasing factor 2, mitochondrial.